The following is a 402-amino-acid chain: Plasminogen activator inhibitor 1 (402 aa).

Positions 1–23 are cleaved as a signal peptide; that stretch reads MRMSLVFACLAMGLALTFAEGSA. N-linked (GlcNAc...) asparagine glycosylation is found at asparagine 232, asparagine 288, and asparagine 352.

Belongs to the serpin family. As to quaternary structure, forms a heterodimer with TMPRSS7. Interacts with VTN. Binds LRP1B; binding is followed by internalization and degradation. Interacts with PPP1CB. In complex with PLAU/uPA, interacts with PLAUR/uPAR. Interacts with SORL1 and LRP1, either alone or in complex with PLAU; these interactions are abolished in the presence of LRPAP1/RAP. The ternary complex composed of PLAUR-PLAU-PAI1 also interacts with SORL1. Interacts with PLAT/tPA. Also interacts with SORL1, when complexed to PLAT/tPA.

Its subcellular location is the secreted. Functionally, serine protease inhibitor. Inhibits TMPRSS7. Is a primary inhibitor of tissue-type plasminogen activator (PLAT) and urokinase-type plasminogen activator (PLAU). As PLAT inhibitor, it is required for fibrinolysis down-regulation and is responsible for the controlled degradation of blood clots. As PLAU inhibitor, it is involved in the regulation of cell adhesion and spreading. Acts as a regulator of cell migration, independently of its role as protease inhibitor. It is required for stimulation of keratinocyte migration during cutaneous injury repair. It is involved in cellular and replicative senescence. Plays a role in alveolar type 2 cells senescence in the lung. Is involved in the regulation of cementogenic differentiation of periodontal ligament stem cells, and regulates odontoblast differentiation and dentin formation during odontogenesis. This Sus scrofa (Pig) protein is Plasminogen activator inhibitor 1 (SERPINE1).